Consider the following 104-residue polypeptide: MAANPSGQGFQNKNRVAILAELDKEKRKLLMQNQSSTSHPGASISLSRPSLTKDFRDHAEQQHIAAQQKAALQHAHAHSSGYFITQDSAFGNLILPVLPRLDPE.

Ala-2 bears the N-acetylalanine mark. At Ser-50 the chain carries Phosphoserine.

Belongs to the SOSS-C family. Component of the SOSS complex, composed of SOSS-B (SOSS-B1/NABP2 or SOSS-B2/NABP1), SOSS-A/INTS3 and SOSS-C/INIP. SOSS complexes containing SOSS-B1/NABP2 are more abundant than complexes containing SOSS-B2/NABP1. Interacts with INTS3; the interaction is direct.

It is found in the nucleus. In terms of biological role, component of the SOSS complex, a multiprotein complex that functions downstream of the MRN complex to promote DNA repair and G2/M checkpoint. The SOSS complex associates with single-stranded DNA at DNA lesions and influences diverse endpoints in the cellular DNA damage response including cell-cycle checkpoint activation, recombinational repair and maintenance of genomic stability. Required for efficient homologous recombination-dependent repair of double-strand breaks (DSBs) and ATM-dependent signaling pathways. This Mus musculus (Mouse) protein is SOSS complex subunit C (Inip).